Consider the following 270-residue polypeptide: MAPIFKSLALVSALFAAISSAAPVNLDKREVDVVWTTVTTVVWTTIDVTTTIYPTPQAPTPPVVESTPTPTPSAAPEQAEPIETSTQPETTKSQPTQPSVATFIPVAAAAAAADSAAPIPEEPAPQPATTAAPSTSTTTQAAPSAPPAANSGSTEKAASSGYSGPCSKGSPCVGQLTYYDTATSASAPSSCGLTNDGFSENVVALPVGIMTDADCGKTVTITYNGITKTATVVDKCMGCKPTDLDASRHLFGELADFSAGRIDGMSWYFN.

A signal peptide spans 1–21 (MAPIFKSLALVSALFAAISSA). Disordered stretches follow at residues 53 to 97 (YPTP…QPTQ) and 113 to 167 (ADSA…GPCS). The segment covering 63–81 (VVESTPTPTPSAAPEQAEP) has biased composition (low complexity). The span at 83–97 (ETSTQPETTKSQPTQ) shows a compositional bias: polar residues. A compositionally biased stretch (low complexity) spans 127 to 149 (PATTAAPSTSTTTQAAPSAPPAA). Residues 150–162 (NSGSTEKAASSGY) are compositionally biased toward polar residues.

The sequence is that of Allergen Asp f 7 from Aspergillus fumigatus (strain ATCC MYA-4609 / CBS 101355 / FGSC A1100 / Af293) (Neosartorya fumigata).